A 576-amino-acid polypeptide reads, in one-letter code: Sulfite reductase [NADPH] hemoprotein beta-component (576 aa).

Residues 1-12 (MDAKTQPDRSRD) show a composition bias toward basic and acidic residues. Residues 1–26 (MDAKTQPDRSRDVSQPLDKLGPDETL) form a disordered region. [4Fe-4S] cluster is bound by residues Cys-441, Cys-447, Cys-486, and Cys-490. Cys-490 provides a ligand contact to siroheme.

Belongs to the nitrite and sulfite reductase 4Fe-4S domain family. As to quaternary structure, alpha(8)-beta(8). The alpha component is a flavoprotein, the beta component is a hemoprotein. The cofactor is siroheme. [4Fe-4S] cluster serves as cofactor.

The catalysed reaction is hydrogen sulfide + 3 NADP(+) + 3 H2O = sulfite + 3 NADPH + 4 H(+). The protein operates within sulfur metabolism; hydrogen sulfide biosynthesis; hydrogen sulfide from sulfite (NADPH route): step 1/1. Its function is as follows. Component of the sulfite reductase complex that catalyzes the 6-electron reduction of sulfite to sulfide. This is one of several activities required for the biosynthesis of L-cysteine from sulfate. The protein is Sulfite reductase [NADPH] hemoprotein beta-component of Nitrobacter winogradskyi (strain ATCC 25391 / DSM 10237 / CIP 104748 / NCIMB 11846 / Nb-255).